Consider the following 315-residue polypeptide: WD repeat domain-containing protein 83 (315 aa).

WD repeat units lie at residues 23–62 (CGQG…LLRT), 65–104 (GHGY…VVRK), 107–146 (GHAG…PEPV), 151–188 (EARD…VTSD), 190–228 (VGSP…LLGE), 231–272 (GHKN…LALA), and 275–313 (VGSN…AEGG).

The protein belongs to the WD repeat MORG1 family. As to quaternary structure, interacts with EGLN3/PHD3. Interacts with ERK signaling proteins MAP2K1/MEK1, MAP2K2/MEK2, LAMTOR3, ARAF/Raf-1, MAPK1/ERK2 and MAPK3/ERK1. Identified in the spliceosome C complex. Interacts with PARD6B and CRB3. Interacts strongly with GTP-bound RRAGA but not with inactive GDP-bound. Interacts with p62/SQSTM1. Highly expressed in testis and brain. Expressed at intermediate level in heart, liver and kidney. Weakly expressed in spleen and lung and absent in muscle.

The protein resides in the cytoplasm. It is found in the lysosome. It localises to the nucleus. Functionally, molecular scaffold protein for various multimeric protein complexes. Acts as a module in the assembly of a multicomponent scaffold for the ERK pathway, linking ERK responses to specific agonists. At low concentrations it enhances ERK activation, whereas high concentrations lead to the inhibition of ERK activation. Also involved in response to hypoxia by acting as a negative regulator of HIF1A/HIF-1-alpha via its interaction with EGLN3/PHD3. May promote degradation of HIF1A. May act by recruiting signaling complexes to a specific upstream activator. May also be involved in pre-mRNA splicing. Participates in tight junction development by regulating apico-basal polarity, a key step in tissue development and organization. Mechanistically, regulates the translocation of PAR6-aPKC from the cytoplasm to the apical surface by acting as an adapter between PARD6B AND CRB3. Also acts as a negative regulator of mTORC1 under nutrient-rich conditions by binding to the active Rag GTPases to inhibit mTORC1 localization to the lysosome and phosphorylation of downstream targets. This facilitates constitutive basal autophagy during nutrient availability. This is WD repeat domain-containing protein 83 (Wdr83) from Rattus norvegicus (Rat).